A 600-amino-acid polypeptide reads, in one-letter code: Probable translation initiation factor IF-2 (600 aa).

A tr-type G domain is found at 13 to 228; it reads LRTPIVAVLG…VLMGLAQRYM (216 aa). Residues 22-29 form a G1 region; that stretch reads GHVDHGKT. 22-29 lines the GTP pocket; the sequence is GHVDHGKT. Positions 47–51 are G2; it reads AITQH. The G3 stretch occupies residues 84-87; that stretch reads DTPG. GTP contacts are provided by residues 84–88 and 138–141; these read DTPGH and NKID. Residues 138-141 form a G4 region; sequence NKID. Positions 140-162 are disordered; that stretch reads IDTTPGWNPNPDAPVQGTYDDQS. The segment at 206–208 is G5; it reads SAE.

Belongs to the TRAFAC class translation factor GTPase superfamily. Classic translation factor GTPase family. IF-2 subfamily.

Function in general translation initiation by promoting the binding of the formylmethionine-tRNA to ribosomes. Seems to function along with eIF-2. This Halobacterium salinarum (strain ATCC 700922 / JCM 11081 / NRC-1) (Halobacterium halobium) protein is Probable translation initiation factor IF-2.